The chain runs to 118 residues: Small ribosomal subunit protein uS13 (118 aa).

Residues 96 to 118 (PLRGQRTRTNARTRKGPRKAIKK) are disordered.

Belongs to the universal ribosomal protein uS13 family. As to quaternary structure, part of the 30S ribosomal subunit. Forms a loose heterodimer with protein S19. Forms two bridges to the 50S subunit in the 70S ribosome.

Located at the top of the head of the 30S subunit, it contacts several helices of the 16S rRNA. In the 70S ribosome it contacts the 23S rRNA (bridge B1a) and protein L5 of the 50S subunit (bridge B1b), connecting the 2 subunits; these bridges are implicated in subunit movement. Contacts the tRNAs in the A and P-sites. The polypeptide is Small ribosomal subunit protein uS13 (Stenotrophomonas maltophilia (strain K279a)).